The chain runs to 165 residues: Protein SprT (165 aa).

The region spanning 10-158 (EACYRQAEHF…CRRCKATLVF (149 aa)) is the SprT-like domain. Zn(2+) is bound at residue His69. Glu70 is a catalytic residue. His73 lines the Zn(2+) pocket.

This sequence belongs to the SprT family. Zn(2+) is required as a cofactor.

It localises to the cytoplasm. The sequence is that of Protein SprT from Pseudomonas aeruginosa (strain LESB58).